The following is a 210-amino-acid chain: Glutathione S-transferase P (210 aa).

Positions 2–81 constitute a GST N-terminal domain; it reads PPYTIVYFPV…HLGRSLGLYG (80 aa). Tyrosine 4 carries the phosphotyrosine; by EGFR modification. Glutathione contacts are provided by residues tyrosine 8, arginine 14, tryptophan 39, lysine 45, 52 to 53, and 65 to 66; these read QL and QS. The GST C-terminal domain occupies 83 to 204; it reads DQKEAALVDM…SSPDHVNRPI (122 aa). An N6-succinyllysine mark is found at lysine 103 and lysine 116. Lysine 128 carries the N6-acetyllysine modification.

The protein belongs to the GST superfamily. Pi family. In terms of assembly, homodimer. Interacts with CDK5.

The protein localises to the cytoplasm. The protein resides in the mitochondrion. It localises to the nucleus. The enzyme catalyses RX + glutathione = an S-substituted glutathione + a halide anion + H(+). The catalysed reaction is prostaglandin J2 + glutathione = prostaglandin J2-S-(R)-glutathione. It catalyses the reaction prostaglandin J2 + glutathione = prostaglandin J2-S-(S)-glutathione. It carries out the reaction prostaglandin A2 + glutathione = prostaglandin A2-S-(S)-glutathione. The enzyme catalyses 11(S)-hydroxy-14(S),15(S)-epoxy-(5Z,8Z,12E)-eicosatrienoate + glutathione = (11S,15S)-dihydroxy-14(R)-S-glutathionyl-(5Z,8Z,12E)-eicosatrienoate. Its function is as follows. Conjugation of reduced glutathione to a wide number of exogenous and endogenous hydrophobic electrophiles. Involved in the formation of glutathione conjugates of both prostaglandin A2 (PGA2) and prostaglandin J2 (PGJ2). Participates in the formation of novel hepoxilin regioisomers. Negatively regulates CDK5 activity via p25/p35 translocation to prevent neurodegeneration. In Mesocricetus auratus (Golden hamster), this protein is Glutathione S-transferase P (GSTP1).